The chain runs to 152 residues: MWKEFKEFAMKGNVIDLAIGVVIGGAFGKIVTSLVNDIIMPVVGSLVGKVDFSNLYINLSGQQFNSLQEAQAAGAATINYGLFLNNLINFLIIAFSIFIVIKQINKLKNFTKKKEEVKVEATEKDCPYCYTKIDIKATRCPHCTSVLEEATN.

2 consecutive transmembrane segments (helical) span residues 14–34 (VIDLAIGVVIGGAFGKIVTSL) and 81–101 (GLFLNNLINFLIIAFSIFIVI).

Belongs to the MscL family. In terms of assembly, homopentamer.

The protein resides in the cell membrane. In terms of biological role, channel that opens in response to stretch forces in the membrane lipid bilayer. May participate in the regulation of osmotic pressure changes within the cell. The polypeptide is Large-conductance mechanosensitive channel (Clostridium perfringens (strain ATCC 13124 / DSM 756 / JCM 1290 / NCIMB 6125 / NCTC 8237 / Type A)).